The following is a 124-amino-acid chain: UPF0102 protein Noc_0355 (124 aa).

The protein belongs to the UPF0102 family.

This is UPF0102 protein Noc_0355 from Nitrosococcus oceani (strain ATCC 19707 / BCRC 17464 / JCM 30415 / NCIMB 11848 / C-107).